The sequence spans 58 residues: U-scoloptoxin(14)-Sa1a (58 aa).

The first 18 residues, 1–18, serve as a signal peptide directing secretion; that stretch reads MNRILGMIFLFCLISCYA.

This sequence belongs to the scoloptoxin-14 family. Contains 4 disulfide bonds. In terms of tissue distribution, expressed by the venom gland.

Its subcellular location is the secreted. The protein is U-scoloptoxin(14)-Sa1a of Scolopendra alternans (Florida Keys giant centipede).